The chain runs to 566 residues: MAPSTLICDTDSWQNLKTHVAEIKKTHLRDLMSDADRCKSMMVEFDGLLLDYSRQNATHDTMSKLFQLAEASHLKDKINQMFNGEHINSTENRSVLHVALRASRDAVINGDGKNVVPDVWQVLDKIRDFSEKIRSGSWVGVTGKPLTNVVAVGIGGSFLGPLFVHTALQTESEAAECAKGRQLRFLANVDPIDVAKNISGLNPETTLVVVVSKTFTTAETMLNARTLREWISSALGPAAVAKHMVAVSTNLTLVEKFGIDPKNAFAFWDWVGGRYSVCSAVGVLPLSLQYGFPIVEKFLKGASSIDQHFHSAPLEKNLPVLLGLLSLWNVSFLGHPARAILPYCQALEKFAPHIQQVSMESNGKGVSIDGVVLPFEAGEIDFGEPGTNGQHSFYQLIHQGRVIPCDFIGIAKSQQPVYLKGEVVSNHDELMSNFFAQPDALAYGKTQEELQKENISPHLVPHKTFTGNRPSLSLLLPSLTAYNVGQLLAIYEHRVAVEGFVWGINSFDQWGVELGKSLANQVRKQLHASRTNGEAVKGFNFSTTTVMAKYLQETSDVPAELPTKLP.

The Proton donor role is filled by glutamate 360. Residues histidine 391 and lysine 516 contribute to the active site.

This sequence belongs to the GPI family. As to quaternary structure, homodimer.

It is found in the cytoplasm. The enzyme catalyses alpha-D-glucose 6-phosphate = beta-D-fructose 6-phosphate. It participates in carbohydrate degradation; glycolysis; D-glyceraldehyde 3-phosphate and glycerone phosphate from D-glucose: step 2/4. This is Glucose-6-phosphate isomerase, cytosolic (PGIC) from Spinacia oleracea (Spinach).